The chain runs to 1638 residues: ATP-dependent helicase brm (1638 aa).

Disordered regions lie at residues methionine 1–asparagine 137 and glutamine 201–methionine 387. The span at alanine 7–histidine 51 shows a compositional bias: pro residues. Low complexity predominate over residues proline 52 to proline 63. Pro residues predominate over residues glycine 121–glutamate 131. The QLQ domain maps to histidine 173–alanine 208. Residues glutamine 201–glutamine 211 are compositionally biased toward low complexity. Composition is skewed to pro residues over residues glutamine 212–glycine 231, proline 238–glycine 253, alanine 263–proline 272, and alanine 279–isoleucine 304. Composition is skewed to low complexity over residues glutamine 305–serine 317 and proline 365–proline 382. Positions glutamine 501 to alanine 573 constitute an HSA domain. A disordered region spans residues aspartate 691–lysine 730. Phosphoserine occurs at positions 695 and 698. Positions asparagine 699–glutamate 708 are enriched in basic and acidic residues. Residues proline 710–glycine 724 are compositionally biased toward polar residues. In terms of domain architecture, Helicase ATP-binding spans valine 785–serine 950. An ATP-binding site is contributed by aspartate 798–threonine 805. Residues aspartate 900–histidine 903 carry the DEGH box motif. The Helicase C-terminal domain maps to leucine 1102–glutamine 1263. Over residues aspartate 1380–aspartate 1391 the composition is skewed to acidic residues. The tract at residues aspartate 1380–leucine 1412 is disordered. Phosphoserine occurs at positions 1407 and 1411. The Bromo domain maps to arginine 1425–isoleucine 1530. The tract at residues asparagine 1544–serine 1578 is disordered. Over residues serine 1557–isoleucine 1574 the composition is skewed to acidic residues. 2 positions are modified to phosphoserine: serine 1591 and serine 1594. Positions leucine 1592–serine 1604 are enriched in low complexity. Residues leucine 1592–aspartate 1638 are disordered. Residues lysine 1616–lysine 1625 show a composition bias toward basic residues.

In terms of assembly, component of the Brahma complex, which is composed of brm, osa, mor, Snr1/Bap45, dalao/Bap111, Bap55, Bap60 and Act42A/Bap47. Interacts with asf1. Associates with the brm-HDAC3-erm repressor complex, composed of brm, HDAC3 and erm. Interacts with erm and HDAC3.

It localises to the nucleus. It catalyses the reaction ATP + H2O = ADP + phosphate + H(+). Functionally, transcriptional regulator. Acts as a coactivator, assisting one or more dedicated transcriptional activators of ANTC and BXC homeotic gene clusters. Can counteract the repressive effect of Polycomb protein. ATPase subunit of the Brahma complex, a multiprotein complex which is the equivalent of the yeast SWI/SNF complex and acts by remodeling the chromatin by catalyzing an ATP-dependent alteration in the structure of nucleosomal DNA. This complex can both serve as a transcriptional coactivator or corepressor, depending on the context. In type II neuroblast lineage, as part of the Brm remodeling complex, suppresses the formation of ectopic neuroblasts probably through interaction with erm and HDAC3. The protein is ATP-dependent helicase brm (brm) of Drosophila melanogaster (Fruit fly).